The chain runs to 1331 residues: MMEPSEDSFETMMERKNPSSKQMESSEGSSNTTVETPPGGRVEAAGLASGLAQEMGEQSIDLRQDMEEPSSGPHREIKDPPNDLLQDLEESCEGSHLEEGGPFGGAPGEMEEEEDNPWESQEDQDYYTDLAESEEDESPEEPDSSTVEVMGMVRSIISLYFRMQDLREQQRVAEEILMNAINKGQLPNPKQFSGDRREYHEFIVLCQLILQSYPRVFCNDRLRVGYIISHLSGMAMEWAGDLLERESSVIDDFPAFLEAMNDTFEYRQALRVAEDAMFNLRQGDRAAIEYINEFQSLVPTLGWPDEVLQAHLCQGLKEDIRQYLFRIPQPNSLENLITLVLQIEDKLAERRAILRLLPESRPRHLTWLDSPVPERWTVSTWLPNEFHPGIKRNHLFLLLLVRVNPYHSVAVQALVDSGATSNYMDEGFAQEHYVELYQKPYAESVQTADGSLVGNEPVWLYTEPLVCLHQNHQESLEFDIVASSKFSVVLGIKWLQLHAPEIDWVKGRCTFHSPYCLKNCFRPPPPCIALEHHAVSLLPGLPHQYSDLADVFNPKEADEETSDQPSSDGSDDLSESEPSELQQAGDSDQSEETFYDCASTAPWEPVGAGTQEKAKQEEFWDPKDMLTSRHDYVQMIPELFDQLHGATWFTKLELRGTIVEESMSIHQTEDVWKVAFGLELQDMASYQPFLICADPIIPQGVIHFILKDMIGLFVVSYGQDVLVYSMSQEEHYHHVRQVLVRFRYHYVYCSLQRSQFHRHTAEFLGFVVTPKGVKLNKSIVSTITGYPTPGSRKSLRNLMEFAFPYRHFVERFADITEPLVRQLQADLPFYWGDEEQEAFVGLKRAFRKAPLLYHPKPQNQFYLQTGVTKTSLHASLIQMDKRTGKKVCCAFYSRNISPMEVEASPAEMKILPIRAAFMVWCRYLENTEEPIMILLNKEDLASLNNDRLTVLLPGHWVFFFTHFNFDVMEMPSSEDDQPLPRRQRLGERAQQRRVATTTRPTMLVTMPAPTGDQSPESEDEEESEGALHPDEPNGQNLQQGYLALIPVDQIFNSFLAHFSMAQIRAVLLHFYRSLLFWKNLLAMAALLVMLRFRRRLALLPAPAADPARPPQRRSLRLFLDASLLTSSGIATAVTQLFTQMPPLVGTNALPAEELAELFLGPGPWQLNALRGLQMTPRFWQMLCQFFGIRGRALEGTQTHPSPHQSLAPHVEGDEYVVLREALQDDLQRFRQCGLHDGLQDTSQDAQDDVWALRPRQHLPTEAEVLARLTYIRSTQGGSVVIHRELTARDLIDFLASVYTQALPTLVEASPPREGATLEELPSDADEDAGLD.

4 disordered regions span residues 1–123, 128–147, 556–595, and 971–1033; these read MMEP…SQED, TDLAESEEDESPEEPDSSTV, EADEETSDQPSSDGSDDLSESEPSELQQAGDSDQSEETFY, and PSSE…DEPN. Residues 19-30 are compositionally biased toward low complexity; sequence SSKQMESSEGSS. Composition is skewed to acidic residues over residues 109-123, 128-143, and 569-578; these read EMEEEEDNPWESQED, TDLAESEEDESPEEPD, and GSDDLSESEP. A compositionally biased stretch (low complexity) spans 992-1001; it reads RRVATTTRPT. Positions 1015-1024 are enriched in acidic residues; it reads PESEDEEESE. 2 consecutive transmembrane segments (helical) span residues 1070 to 1090 and 1117 to 1137; these read FYRSLLFWKNLLAMAALLVML and LFLDASLLTSSGIATAVTQLF. The interval 1309–1331 is disordered; it reads SPPREGATLEELPSDADEDAGLD. Residues 1320–1331 are compositionally biased toward acidic residues; sequence LPSDADEDAGLD.

It localises to the membrane. Plays an essential role in capillaries endothelial cells for the maintenance of feto-maternal interface and for development of the placenta. The chain is Retrotransposon-like protein 1 (RTL1) from Bos taurus (Bovine).